Here is a 566-residue protein sequence, read N- to C-terminus: E3 ubiquitin-protein ligase RNF220 (566 aa).

Lysine 277 participates in a covalent cross-link: Glycyl lysine isopeptide (Lys-Gly) (interchain with G-Cter in SUMO2). The tract at residues 277 to 297 (KREGESPTASPHSSATDDLHH) is disordered. Serine 390 carries the phosphoserine modification. The stretch at 485–513 (EDSAVTTFEALKARVRELERQLSRGDRYK) forms a coiled coil. Positions 514 to 522 (CLICMDSYS) are required for targeting to the cytoplasm. The segment at 514–553 (CLICMDSYSMPLTSIQCWHVHCEECWLRTLGAKKLCPQCN) adopts an RING-type zinc-finger fold.

Interacts with SIN3B. Interacts with CTNNB1 (via Armadillo repeats 2-8). Interacts with USP7 (via MATH domain). Auto-ubiquitinated; leads to proteasomal degradation.

It is found in the cytoplasm. The protein resides in the nucleus. The catalysed reaction is S-ubiquitinyl-[E2 ubiquitin-conjugating enzyme]-L-cysteine + [acceptor protein]-L-lysine = [E2 ubiquitin-conjugating enzyme]-L-cysteine + N(6)-ubiquitinyl-[acceptor protein]-L-lysine.. Its pathway is protein modification; protein ubiquitination. In terms of biological role, E3 ubiquitin-protein ligase that promotes the ubiquitination and proteasomal degradation of SIN3B. Independently of its E3 ligase activity, acts as a CTNNB1 stabilizer through USP7-mediated deubiquitination of CTNNB1 and promotes Wnt signaling. Plays a critical role in the regulation of nuclear lamina. This Macaca fascicularis (Crab-eating macaque) protein is E3 ubiquitin-protein ligase RNF220 (RNF220).